The sequence spans 277 residues: uncharacterized protein (277 aa).

This is an uncharacterized protein from Methanocaldococcus jannaschii (strain ATCC 43067 / DSM 2661 / JAL-1 / JCM 10045 / NBRC 100440) (Methanococcus jannaschii).